A 252-amino-acid chain; its full sequence is Imidazole glycerol phosphate synthase subunit HisF (252 aa).

Active-site residues include D11 and D130.

The protein belongs to the HisA/HisF family. Heterodimer of HisH and HisF.

The protein resides in the cytoplasm. It catalyses the reaction 5-[(5-phospho-1-deoxy-D-ribulos-1-ylimino)methylamino]-1-(5-phospho-beta-D-ribosyl)imidazole-4-carboxamide + L-glutamine = D-erythro-1-(imidazol-4-yl)glycerol 3-phosphate + 5-amino-1-(5-phospho-beta-D-ribosyl)imidazole-4-carboxamide + L-glutamate + H(+). Its pathway is amino-acid biosynthesis; L-histidine biosynthesis; L-histidine from 5-phospho-alpha-D-ribose 1-diphosphate: step 5/9. In terms of biological role, IGPS catalyzes the conversion of PRFAR and glutamine to IGP, AICAR and glutamate. The HisF subunit catalyzes the cyclization activity that produces IGP and AICAR from PRFAR using the ammonia provided by the HisH subunit. The polypeptide is Imidazole glycerol phosphate synthase subunit HisF (Staphylococcus epidermidis (strain ATCC 12228 / FDA PCI 1200)).